The following is a 919-amino-acid chain: Plasma membrane ATPase 1 (919 aa).

Positions 1-16 are enriched in basic and acidic residues; it reads MADNAGEYHDAEKHAP. The disordered stretch occupies residues 1-73; the sequence is MADNAGEYHD…APAAGEAKAV (73 aa). The Cytoplasmic portion of the chain corresponds to 1–113; that stretch reads MADNAGEYHD…KEELENPFLK (113 aa). Residues 34-63 are compositionally biased toward acidic residues; it reads QDDEPDDDIDALIEELFSEDVQEEQEDNDD. Ser89 is modified (phosphoserine). A helical transmembrane segment spans residues 114 to 134; the sequence is FIMFFVGPIQFVMEMAAALAA. Residues 135–138 are Extracellular-facing; the sequence is GLRD. Residues 139–158 traverse the membrane as a helical segment; the sequence is WVDFGVICALLMLNAVVGFV. Residues 159-289 lie on the Cytoplasmic side of the membrane; it reads QEYQAGSIVD…GTGHFTEVLN (131 aa). Residues 290–311 form a helical membrane-spanning segment; sequence GIGTILLVLVLLTLFCIYTAAF. The Extracellular portion of the chain corresponds to 312-322; that stretch reads YRSVRLARLLE. Residues 323 to 345 traverse the membrane as a helical segment; it reads YTLAITIIGVPVGLPAVVTTTMA. Over 346–717 the chain is Cytoplasmic; sequence VGAAYLAEKQ…LIIRNQLLNL (372 aa). The active-site 4-aspartylphosphate intermediate is the Asp376. Phosphoserine is present on Ser494. The Mg(2+) site is built by Asp632 and Asp636. The chain crosses the membrane as a helical span at residues 718-736; it reads ELVVFIAIFADVATLAIAY. At 737–752 the chain is on the extracellular side; it reads DNAPYSMKPVKWNLPR. A helical membrane pass occupies residues 753 to 772; sequence LWGLSTVIGIVLAIGTWITN. At 773–824 the chain is on the cytoplasmic side; it reads TTMIAQGQNRGIVQNFGVQDEVLFLEISLTENWLIFVTRCNGPFWSSIPSWQ. The chain crosses the membrane as a helical span at residues 825 to 845; sequence LSGAVLAVDILATMFCIFGWF. Residues 846–858 lie on the Extracellular side of the membrane; it reads KGGHQTSIVAVLR. Residues 859 to 875 form a helical membrane-spanning segment; the sequence is IWMYSFGIFCIMAGTYY. Residues 876-919 lie on the Cytoplasmic side of the membrane; that stretch reads ILSESAGFDRMMNGKPKESRNQRSIEDLVVALQRTSTRHEKGDA. Ser899 is modified (phosphoserine).

It belongs to the cation transport ATPase (P-type) (TC 3.A.3) family. Type IIIA subfamily.

It localises to the cell membrane. The enzyme catalyses ATP + H2O + H(+)(in) = ADP + phosphate + 2 H(+)(out). Functionally, the plasma membrane ATPase of plants and fungi is a hydrogen ion pump. The proton gradient it generates drives the active transport of nutrients by H(+)-symport. The resulting external acidification and/or internal alkinization may mediate growth responses. This Schizosaccharomyces pombe (strain 972 / ATCC 24843) (Fission yeast) protein is Plasma membrane ATPase 1 (pma1).